Consider the following 135-residue polypeptide: uncharacterized protein (135 aa).

The next 4 helical transmembrane spans lie at 4 to 24, 26 to 46, 68 to 88, and 93 to 113; these read IIIC…WIFG, WDMP…TGVI, LILV…NGAW, and LIAY…CAAL.

This sequence belongs to the bacteriophage holin family. Cp-1 holin subfamily.

Its subcellular location is the cell membrane. This is an uncharacterized protein from Clostridium perfringens (strain 13 / Type A).